The primary structure comprises 260 residues: Thaumatin-like protein 1 (260 aa).

The N-terminal stretch at Met-1–Gly-32 is a signal peptide. Disulfide bonds link Cys-41–Cys-255, Cys-89–Cys-100, Cys-105–Cys-112, Cys-166–Cys-245, Cys-171–Cys-228, Cys-179–Cys-191, Cys-195–Cys-204, and Cys-205–Cys-215.

The protein belongs to the thaumatin family. As to expression, expressed only in roots.

Involved in local responses of roots to colonization by non-pathogenic plant growth-promoting rhizobacteria (PGPR) fluorescent Pseudomonas spp., but seems to not being required for the establishment of subsequent induced systemic resistance (ISR). The polypeptide is Thaumatin-like protein 1 (Arabidopsis thaliana (Mouse-ear cress)).